A 198-amino-acid chain; its full sequence is Elongation factor Ts (198 aa).

An involved in Mg(2+) ion dislocation from EF-Tu region spans residues 81-84 (TDFV).

The protein belongs to the EF-Ts family.

It localises to the cytoplasm. Associates with the EF-Tu.GDP complex and induces the exchange of GDP to GTP. It remains bound to the aminoacyl-tRNA.EF-Tu.GTP complex up to the GTP hydrolysis stage on the ribosome. In Leptospira biflexa serovar Patoc (strain Patoc 1 / Ames), this protein is Elongation factor Ts.